A 307-amino-acid polypeptide reads, in one-letter code: N-acetylmuramic acid 6-phosphate etherase (307 aa).

The SIS domain maps to 59 to 222 (TADRLRQGGR…STGVMVKLGK (164 aa)). Catalysis depends on E87, which acts as the Proton donor. Residue E118 is part of the active site.

It belongs to the GCKR-like family. MurNAc-6-P etherase subfamily. In terms of assembly, homodimer.

It catalyses the reaction N-acetyl-D-muramate 6-phosphate + H2O = N-acetyl-D-glucosamine 6-phosphate + (R)-lactate. It participates in amino-sugar metabolism; N-acetylmuramate degradation. In terms of biological role, specifically catalyzes the cleavage of the D-lactyl ether substituent of MurNAc 6-phosphate, producing GlcNAc 6-phosphate and D-lactate. This is N-acetylmuramic acid 6-phosphate etherase from Nostoc sp. (strain PCC 7120 / SAG 25.82 / UTEX 2576).